Here is a 103-residue protein sequence, read N- to C-terminus: Large ribosomal subunit protein bL21 (103 aa).

The protein belongs to the bacterial ribosomal protein bL21 family. In terms of assembly, part of the 50S ribosomal subunit. Contacts protein L20.

In terms of biological role, this protein binds to 23S rRNA in the presence of protein L20. The protein is Large ribosomal subunit protein bL21 of Ectopseudomonas mendocina (strain ymp) (Pseudomonas mendocina).